The following is a 233-amino-acid chain: tRNA (guanine-N(7)-)-methyltransferase (233 aa).

Positions 1 to 23 are disordered; it reads MSPQDRPSRTTEAFFGRRRGKPV. S-adenosyl-L-methionine-binding residues include Glu-64, Glu-89, Asp-116, and Asp-138. The active site involves Asp-138. Substrate contacts are provided by residues Lys-142, Asp-174, and 212–215; that span reads TRYE.

This sequence belongs to the class I-like SAM-binding methyltransferase superfamily. TrmB family.

The enzyme catalyses guanosine(46) in tRNA + S-adenosyl-L-methionine = N(7)-methylguanosine(46) in tRNA + S-adenosyl-L-homocysteine. The protein operates within tRNA modification; N(7)-methylguanine-tRNA biosynthesis. In terms of biological role, catalyzes the formation of N(7)-methylguanine at position 46 (m7G46) in tRNA. The protein is tRNA (guanine-N(7)-)-methyltransferase of Mesorhizobium japonicum (strain LMG 29417 / CECT 9101 / MAFF 303099) (Mesorhizobium loti (strain MAFF 303099)).